The primary structure comprises 380 residues: GATOR1 complex protein NPRL2 (380 aa).

The tract at residues 1-133 (MGSSCRIECI…SKQKLVPIMT (133 aa)) is interaction with PDPK1. Arg78 provides a ligand contact to GDP. Arg78 is modified (asymmetric dimethylarginine). Glycyl lysine isopeptide (Lys-Gly) (interchain with G-Cter in ubiquitin) cross-links involve residues Lys158 and Lys357.

Belongs to the NPR2 family. Within the GATOR complex, component of the GATOR1 subcomplex, made of DEPDC5, NPRL2 and NPRL3. GATOR1 mediates the strong interaction of the GATOR complex with small GTPases Rag (RagA/RRAGA, RagB/RRAGB, RagC/RRAGC and/or RagD/RRAGD) heterodimers. GATOR1 interacts with GPR155/LYCHOS; interaction takes place in presence of cholesterol and prevents interaction between GATOR1 and KICSTOR. Interacts with PDPK1. In the presence of abundant amino acids, ubiquitinated at Lys-158 and Lys-357 via 'Lys-6'-linked ubiquitination by the WDR24 component of the GATOR2 complex, thereby inhibiting the GATOR1 complex and promoting mTORC1 activation. Post-translationally, asymmetric dimethylation at Arg-78 by PRMT1 inhibits the GTPase activator activity of the GATOR1 complex and consequently inducing timely mTORC1 activation under methionine-sufficient conditions.

It is found in the lysosome membrane. Catalytic component of the GATOR1 complex, a multiprotein complex that functions as an inhibitor of the amino acid-sensing branch of the mTORC1 pathway. In response to amino acid depletion, the GATOR1 complex has GTPase activating protein (GAP) activity and strongly increases GTP hydrolysis by RagA/RRAGA (or RagB/RRAGB) within heterodimeric Rag complexes, thereby turning them into their inactive GDP-bound form, releasing mTORC1 from lysosomal surface and inhibiting mTORC1 signaling. In the presence of abundant amino acids, the GATOR1 complex is ubiquitinated and inhibited by GATOR2. Within the GATOR1 complex, NPRL2 constitutes the catalytic subunit that mediates the GTPase activator activity and under methionine-sufficient conditions, the GTPase activator activity is inhibited by PRMT1 through methylation and consequently inducing timely mTORC1 activation. Functionally, suppresses Src-dependent tyrosine phosphorylation and activation of PDPK1 and its downstream signaling. Down-regulates PDPK1 kinase activity by interfering with tyrosine phosphorylation at 'Tyr-9', 'Tyr-373' and 'Tyr-376' residues. May act as a tumor suppressor. Suppresses cell growth and enhances sensitivity to various anticancer drugs. This Mus musculus (Mouse) protein is GATOR1 complex protein NPRL2.